We begin with the raw amino-acid sequence, 364 residues long: Ribosomal RNA large subunit methyltransferase M (364 aa).

Residues S194, 227-230 (CPGG), D246, D266, and D284 each bind S-adenosyl-L-methionine. K313 (proton acceptor) is an active-site residue.

This sequence belongs to the class I-like SAM-binding methyltransferase superfamily. RNA methyltransferase RlmE family. RlmM subfamily. As to quaternary structure, monomer.

The protein localises to the cytoplasm. The enzyme catalyses cytidine(2498) in 23S rRNA + S-adenosyl-L-methionine = 2'-O-methylcytidine(2498) in 23S rRNA + S-adenosyl-L-homocysteine + H(+). Catalyzes the 2'-O-methylation at nucleotide C2498 in 23S rRNA. The protein is Ribosomal RNA large subunit methyltransferase M of Actinobacillus succinogenes (strain ATCC 55618 / DSM 22257 / CCUG 43843 / 130Z).